Reading from the N-terminus, the 307-residue chain is Transposase InsD for insertion element IS2-9 (307 aa).

The region spanning 112–295 is the Integrase catalytic domain; that stretch reads KPAVPPSKRA…SPREYLRQRA (184 aa).

Its function is as follows. Involved in the transposition of the insertion sequence IS2. The chain is Transposase InsD for insertion element IS2-9 from Escherichia coli (strain K12).